The chain runs to 173 residues: RNA pyrophosphohydrolase (173 aa).

One can recognise a Nudix hydrolase domain in the interval 13-166 (PYRPCVGLMI…KRKVYEEVVA (154 aa)). The Nudix box motif lies at 54-75 (GGIDKGEEPLQAAERELYEETG).

It belongs to the Nudix hydrolase family. RppH subfamily. The cofactor is a divalent metal cation.

Accelerates the degradation of transcripts by removing pyrophosphate from the 5'-end of triphosphorylated RNA, leading to a more labile monophosphorylated state that can stimulate subsequent ribonuclease cleavage. This is RNA pyrophosphohydrolase from Mesorhizobium japonicum (strain LMG 29417 / CECT 9101 / MAFF 303099) (Mesorhizobium loti (strain MAFF 303099)).